Here is a 63-residue protein sequence, read N- to C-terminus: Cecropin-1/3 (63 aa).

The signal sequence occupies residues 1–23 (MNFYKVFIFVALILAISLGQSEA). R62 is subject to Arginine amide.

The protein belongs to the cecropin family.

The protein resides in the secreted. Functionally, cecropins have lytic and antibacterial activity against several Gram-positive and Gram-negative bacteria. In Drosophila virilis (Fruit fly), this protein is Cecropin-1/3 (Cec1).